The primary structure comprises 178 residues: Putative RING-H2 finger protein ATL19 (178 aa).

Residues 11-31 (LISVLGLAVFIGLCILLVVLI) traverse the membrane as a helical segment. An RING-type; atypical zinc finger spans residues 130-172 (CAICLSGYVVNEECRVFPVCRHIYHALCIDAWLKNHLTCPTCR).

This sequence belongs to the RING-type zinc finger family. ATL subfamily.

Its subcellular location is the membrane. The catalysed reaction is S-ubiquitinyl-[E2 ubiquitin-conjugating enzyme]-L-cysteine + [acceptor protein]-L-lysine = [E2 ubiquitin-conjugating enzyme]-L-cysteine + N(6)-ubiquitinyl-[acceptor protein]-L-lysine.. It participates in protein modification; protein ubiquitination. This is Putative RING-H2 finger protein ATL19 (ATL19) from Arabidopsis thaliana (Mouse-ear cress).